A 348-amino-acid polypeptide reads, in one-letter code: GTPase Obg (348 aa).

The region spanning 1–159 (MKFVDEVKVH…RELVLELKLM (159 aa)) is the Obg domain. Residues 160–331 (ADVGLVGLPN…LLSALVRILS (172 aa)) enclose the OBG-type G domain. GTP-binding positions include 166 to 173 (GLPNAGKS), 191 to 195 (FTTLI), 213 to 216 (DIPG), 283 to 286 (NKVD), and 312 to 314 (SAR). Positions 173 and 193 each coordinate Mg(2+).

This sequence belongs to the TRAFAC class OBG-HflX-like GTPase superfamily. OBG GTPase family. In terms of assembly, monomer. The cofactor is Mg(2+).

It localises to the cytoplasm. In terms of biological role, an essential GTPase which binds GTP, GDP and possibly (p)ppGpp with moderate affinity, with high nucleotide exchange rates and a fairly low GTP hydrolysis rate. Plays a role in control of the cell cycle, stress response, ribosome biogenesis and in those bacteria that undergo differentiation, in morphogenesis control. The sequence is that of GTPase Obg from Syntrophobacter fumaroxidans (strain DSM 10017 / MPOB).